A 333-amino-acid polypeptide reads, in one-letter code: Geranylgeranyl pyrophosphate synthase olcC (333 aa).

Isopentenyl diphosphate is bound by residues Lys-61, Arg-64, and His-93. 2 residues coordinate Mg(2+): Asp-100 and Asp-104. A dimethylallyl diphosphate-binding site is contributed by Arg-109. Isopentenyl diphosphate is bound at residue Arg-110. Lys-187, Thr-188, and Gln-221 together coordinate dimethylallyl diphosphate. A Mg(2+)-binding site is contributed by Asp-224. The dimethylallyl diphosphate site is built by Asn-228, Lys-238, and Lys-248.

Belongs to the FPP/GGPP synthase family. The cofactor is Mg(2+).

The enzyme catalyses isopentenyl diphosphate + dimethylallyl diphosphate = (2E)-geranyl diphosphate + diphosphate. It carries out the reaction isopentenyl diphosphate + (2E)-geranyl diphosphate = (2E,6E)-farnesyl diphosphate + diphosphate. It catalyses the reaction isopentenyl diphosphate + (2E,6E)-farnesyl diphosphate = (2E,6E,10E)-geranylgeranyl diphosphate + diphosphate. It participates in secondary metabolite biosynthesis; terpenoid biosynthesis. Geranylgeranyl pyrophosphate synthase; part of the gene cluster that mediates the biosynthesis of 15-deoxyoxalicine B. The first step of the pathway is the synthesis of nicotinyl-CoA from nicotinic acid by the nicotinic acid-CoA ligase olcI. Nicotinyl-CoA is then a substrate of polyketide synthase olcA to produce 4-hydroxy-6-(3-pyridinyl)-2H-pyran-2-one (HPPO) which is further prenylated by the polyprenyl transferase olcH to yield geranylgeranyl-HPPO. Geranylgeranyl pyrophosphate is provided by the cluster-specific geranylgeranyl pyrophosphate synthase olcC. The FAD-dependent monooxygenase olcE catalyzes the epoxidation of geranylgeranyl-HPPO and the terpene cyclase olcD catalyzes the cyclization of the terpenoid component, resulting in the formation of the tricyclic terpene moiety seen in predecaturin E. The cytochrome P450 monooxygenase then catalyzes the allylic oxidation of predecaturin E, which is followed by spirocylization with concomitant loss of one molecule of water to form decaturin E. Decaturin E is the substrate of the cytochrome P450 monooxygenase olcJ which hydroxylates it at the C-29 position to form decaturin F. The short-chain dehydrogenase/reductase olcF may catalyze the oxidation of decaturin F to generate the 29-hydroxyl-27-one intermediate, and subsequent hemiacetal formation probably leads to the formation of decaturin C. The dioxygenase olcK may be a peroxisomal enzyme that catalyzes the hydroxylation of decaturin C into decaturin A once decaturin C is shuttled into the peroxisome by the MFS transporter olcL. Finally the cytochrome P450 monooxygenase olcB catalyzes the oxidative rearrangement to yield 15-deoxyoxalicine B. In the absence of olcJ, decaturin E may be shunted to a pathway in which it is oxidized to a ketone, possibly by olcF, to form decaturin D, which undergoes further allylic oxidation to yield decaturin G. Moreover, in the absence of oclK or oclL, oclB can convert decaturin C into 15-deoxyoxalicine A. The sequence is that of Geranylgeranyl pyrophosphate synthase olcC from Penicillium canescens.